Consider the following 120-residue polypeptide: Large ribosomal subunit protein uL22 (120 aa).

This sequence belongs to the universal ribosomal protein uL22 family. As to quaternary structure, part of the 50S ribosomal subunit.

Functionally, this protein binds specifically to 23S rRNA; its binding is stimulated by other ribosomal proteins, e.g. L4, L17, and L20. It is important during the early stages of 50S assembly. It makes multiple contacts with different domains of the 23S rRNA in the assembled 50S subunit and ribosome. In terms of biological role, the globular domain of the protein is located near the polypeptide exit tunnel on the outside of the subunit, while an extended beta-hairpin is found that lines the wall of the exit tunnel in the center of the 70S ribosome. The sequence is that of Large ribosomal subunit protein uL22 from Corynebacterium efficiens (strain DSM 44549 / YS-314 / AJ 12310 / JCM 11189 / NBRC 100395).